The following is a 493-amino-acid chain: Glutamyl-tRNA(Gln) amidotransferase subunit A (493 aa).

Catalysis depends on charge relay system residues lysine 78 and serine 158. Serine 182 (acyl-ester intermediate) is an active-site residue.

It belongs to the amidase family. GatA subfamily. In terms of assembly, heterotrimer of A, B and C subunits.

It catalyses the reaction L-glutamyl-tRNA(Gln) + L-glutamine + ATP + H2O = L-glutaminyl-tRNA(Gln) + L-glutamate + ADP + phosphate + H(+). In terms of biological role, allows the formation of correctly charged Gln-tRNA(Gln) through the transamidation of misacylated Glu-tRNA(Gln) in organisms which lack glutaminyl-tRNA synthetase. The reaction takes place in the presence of glutamine and ATP through an activated gamma-phospho-Glu-tRNA(Gln). This Rickettsia canadensis (strain McKiel) protein is Glutamyl-tRNA(Gln) amidotransferase subunit A.